Reading from the N-terminus, the 455-residue chain is MLERNDLWNLIKFSMEQDLSKITFQTFVEPAKPLQLDKAQMTIEVPTQLHRDYWEKNLAAKFTDIAMQATNEQIRPVMITEEERQQLTRDKDSQVTTGNVAGQQPTTATTPTFMRETKLNPKYTFDTFVIGKGNQMAHAAALVVSEEPGTMYNPLFFYGGVGLGKTHLMHAIGNKLLETDPTSNIKYVTSESFTNELINAIQTKKQEAFREEYRNVDLLLVDDIQFFANKEATQEEFFHTFNALYEDDKQIVLTSDRLPNEIPQLQDRLVSRFKWGLSVDITPPDLETRIAILRNKADLEGIEIPDDTLSYIAGQIDSNVRELEGALARVQAYSRLNNSPITTSLVADALKSLHLSSKLSEVSIPVIQEKVAKYFHVTMADLKGKKRNKQIVIPRQIAMYLSRELTESSLPRIGNEFGGKDHTTVIHAHDKITKALKTDAELQKAVGDLTGQLKS.

The tract at residues 1 to 75 (MLERNDLWNL…AMQATNEQIR (75 aa)) is domain I, interacts with DnaA modulators. Positions 75–117 (RPVMITEEERQQLTRDKDSQVTTGNVAGQQPTTATTPTFMRET) are domain II. The span at 84-93 (RQQLTRDKDS) shows a compositional bias: basic and acidic residues. Residues 84 to 107 (RQQLTRDKDSQVTTGNVAGQQPTT) are disordered. The interval 118 to 334 (KLNPKYTFDT…GALARVQAYS (217 aa)) is domain III, AAA+ region. ATP-binding residues include G162, G164, K165, and T166. The domain IV, binds dsDNA stretch occupies residues 335–455 (RLNNSPITTS…VGDLTGQLKS (121 aa)).

It belongs to the DnaA family. Oligomerizes as a right-handed, spiral filament on DNA at oriC.

It is found in the cytoplasm. Functionally, plays an essential role in the initiation and regulation of chromosomal replication. ATP-DnaA binds to the origin of replication (oriC) to initiate formation of the DNA replication initiation complex once per cell cycle. Binds the DnaA box (a 9 base pair repeat at the origin) and separates the double-stranded (ds)DNA. Forms a right-handed helical filament on oriC DNA; dsDNA binds to the exterior of the filament while single-stranded (ss)DNA is stabiized in the filament's interior. The ATP-DnaA-oriC complex binds and stabilizes one strand of the AT-rich DNA unwinding element (DUE), permitting loading of DNA polymerase. After initiation quickly degrades to an ADP-DnaA complex that is not apt for DNA replication. Binds acidic phospholipids. The polypeptide is Chromosomal replication initiator protein DnaA (Lactiplantibacillus plantarum (strain ATCC BAA-793 / NCIMB 8826 / WCFS1) (Lactobacillus plantarum)).